A 482-amino-acid polypeptide reads, in one-letter code: GPI mannosyltransferase 3 (482 aa).

A helical transmembrane segment spans residues 12–32 (LFAFIFIFRLANSFAIETFFQ). N-linked (GlcNAc...) asparagine glycosylation occurs at N80. 4 helical membrane-spanning segments follow: residues 114–134 (KLAW…YVIT), 137–155 (FSNN…FWPW), 175–195 (IIRP…LISI), and 199–219 (LKWV…NTAL). N-linked (GlcNAc...) asparagine glycosylation occurs at N242. 3 helical membrane passes run 252-272 (WHFY…PLMI), 274-294 (GLKK…FSLI), and 324-344 (FVLI…NVHE).

This sequence belongs to the glycosyltransferase 22 family. PIGB subfamily.

The protein resides in the endoplasmic reticulum membrane. It participates in glycolipid biosynthesis; glycosylphosphatidylinositol-anchor biosynthesis. In terms of biological role, mannosyltransferase involved in glycosylphosphatidylinositol-anchor biosynthesis. Transfers the third mannose to Man2-GlcN-acyl-PI during GPI precursor assembly. The chain is GPI mannosyltransferase 3 (GPI10) from Candida albicans (strain SC5314 / ATCC MYA-2876) (Yeast).